The chain runs to 389 residues: Major outer membrane porin (389 aa).

A signal peptide spans methionine 1–alanine 23.

This sequence belongs to the chlamydial porin (CP) (TC 1.B.2) family. Part of a disulfide cross-linked outer membrane complex (COMC) composed of the major outer membrane porin (MOMP), the small cysteine-rich protein (OmcA) and the large cysteine-rich periplasmic protein (OmcB).

It is found in the cell outer membrane. Its function is as follows. In elementary bodies (EBs, the infectious stage, which is able to survive outside the host cell) provides the structural integrity of the outer envelope through disulfide cross-links with the small cysteine-rich protein and the large cysteine-rich periplasmic protein. It has been described in publications as the Sarkosyl-insoluble COMC (Chlamydia outer membrane complex), and serves as the functional equivalent of peptidoglycan. Functionally, permits diffusion of specific solutes through the outer membrane. This Chlamydia pneumoniae (Chlamydophila pneumoniae) protein is Major outer membrane porin (ompA).